Consider the following 186-residue polypeptide: GTP cyclohydrolase 1 2 (186 aa).

This sequence belongs to the GTP cyclohydrolase I family. Homomer.

It carries out the reaction GTP + H2O = 7,8-dihydroneopterin 3'-triphosphate + formate + H(+). It functions in the pathway cofactor biosynthesis; 7,8-dihydroneopterin triphosphate biosynthesis; 7,8-dihydroneopterin triphosphate from GTP: step 1/1. This is GTP cyclohydrolase 1 2 from Pseudomonas putida (strain ATCC 47054 / DSM 6125 / CFBP 8728 / NCIMB 11950 / KT2440).